The chain runs to 156 residues: Putative NrdI-like protein (156 aa).

The sequence is that of Putative NrdI-like protein from Streptococcus pneumoniae (strain ATCC BAA-255 / R6).